The primary structure comprises 865 residues: cGMP-specific 3',5'-cyclic phosphodiesterase (865 aa).

At serine 92 the chain carries Phosphoserine. GAF domains lie at 154-304 and 336-493; these read DVTA…GIVL and SLEV…GLGI. A PDEase domain is found at 526–850; the sequence is ETRELQSLAA…QKWQALAEQQ (325 aa). Histidine 603 (proton donor) is an active-site residue. Residues histidine 607, histidine 643, aspartate 644, and aspartate 754 each contribute to the Zn(2+) site. Aspartate 644 is a binding site for Mg(2+). Glutamine 807 lines the 3',5'-cyclic GMP pocket.

Belongs to the cyclic nucleotide phosphodiesterase family. Requires Zn(2+) as cofactor. It depends on Mg(2+) as a cofactor. Post-translationally, phosphorylation is regulated by binding of cGMP to the two allosteric sites. Phosphorylation by PRKG1 leads to its activation.

It carries out the reaction 3',5'-cyclic GMP + H2O = GMP + H(+). Its pathway is purine metabolism; 3',5'-cyclic GMP degradation; GMP from 3',5'-cyclic GMP: step 1/1. With respect to regulation, most potently inhibited by zaprinast and dipyridamole. Plays a role in signal transduction by regulating the intracellular concentration of cyclic nucleotides. This phosphodiesterase catalyzes the specific hydrolysis of cGMP to 5'-GMP. Specifically regulates nitric-oxide-generated cGMP. In Bos taurus (Bovine), this protein is cGMP-specific 3',5'-cyclic phosphodiesterase (PDE5A).